Consider the following 440-residue polypeptide: T-box transcription factor T homolog 2 (440 aa).

Positions 44-215 (LWEKFKSLTN…HNPFAKAFLD (172 aa)) form a DNA-binding region, T-box. Disordered stretches follow at residues 282–303 (APYPHPYQRSSPPTNYGHDTAA) and 393–440 (TTAS…MPSM). The segment covering 409–440 (STDSGYGHSTTPPAPQTRITSNNWSPMTMPSM) has biased composition (polar residues).

In terms of tissue distribution, mesoderm and notochord.

It is found in the nucleus. In terms of biological role, involved in the transcriptional regulation of genes required for mesoderm formation and differentiation. This chain is T-box transcription factor T homolog 2, found in Branchiostoma floridae (Florida lancelet).